The following is a 281-amino-acid chain: Pantothenate synthetase (281 aa).

Position 30 to 37 (30 to 37 (MGNLHAGH)) interacts with ATP. Catalysis depends on H37, which acts as the Proton donor. A (R)-pantoate-binding site is contributed by Q61. Position 61 (Q61) interacts with beta-alanine. 149–152 (GRKD) is an ATP binding site. Q155 serves as a coordination point for (R)-pantoate. ATP contacts are provided by residues V178 and 186–189 (MSSR).

It belongs to the pantothenate synthetase family. In terms of assembly, homodimer.

It is found in the cytoplasm. It carries out the reaction (R)-pantoate + beta-alanine + ATP = (R)-pantothenate + AMP + diphosphate + H(+). Its pathway is cofactor biosynthesis; (R)-pantothenate biosynthesis; (R)-pantothenate from (R)-pantoate and beta-alanine: step 1/1. Catalyzes the condensation of pantoate with beta-alanine in an ATP-dependent reaction via a pantoyl-adenylate intermediate. In Shewanella amazonensis (strain ATCC BAA-1098 / SB2B), this protein is Pantothenate synthetase.